We begin with the raw amino-acid sequence, 64 residues long: Neurotoxin lambda-MeuTx (64 aa).

The signal sequence occupies residues 1-18 (MSTFIVVFLLLTAILCHA). Residues 19–27 (EHAIDETAR) constitute a propeptide that is removed on maturation. Cystine bridges form between Cys29–Cys43, Cys36–Cys49, and Cys42–Cys58.

It belongs to the scorpion calcin-like family. Expressed by the venom gland.

Its subcellular location is the secreted. Functionally, voltage-gated potassium channel (Kv) inhibitor. In addition it may increase intracellular calcium release through the activation of nuclear inositol 1,4,5-trisphosphate receptors (ITPR) of cardiomyocytes, thereby causing an increase in the contraction frequency of these cells. This Mesobuthus eupeus (Lesser Asian scorpion) protein is Neurotoxin lambda-MeuTx.